A 174-amino-acid chain; its full sequence is Peptide methionine sulfoxide reductase MsrA (174 aa).

The active site involves Cys-10.

It belongs to the MsrA Met sulfoxide reductase family.

The enzyme catalyses L-methionyl-[protein] + [thioredoxin]-disulfide + H2O = L-methionyl-(S)-S-oxide-[protein] + [thioredoxin]-dithiol. It catalyses the reaction [thioredoxin]-disulfide + L-methionine + H2O = L-methionine (S)-S-oxide + [thioredoxin]-dithiol. Functionally, has an important function as a repair enzyme for proteins that have been inactivated by oxidation. Catalyzes the reversible oxidation-reduction of methionine sulfoxide in proteins to methionine. This Paenarthrobacter aurescens (strain TC1) protein is Peptide methionine sulfoxide reductase MsrA.